The chain runs to 119 residues: Beta-2-microglobulin (119 aa).

The signal sequence occupies residues 1-20; sequence MSPSVALAVLALLSLSGLEA. The Ig-like C1-type domain maps to 25–114; it reads PKIQVYSRHP…VTLSGPRTVK (90 aa). An intrachain disulfide couples cysteine 45 to cysteine 100.

It belongs to the beta-2-microglobulin family. In terms of assembly, heterodimer of an alpha chain and a beta chain. Beta-2-microglobulin is the beta-chain of major histocompatibility complex class I molecules.

The protein resides in the secreted. Functionally, component of the class I major histocompatibility complex (MHC). Involved in the presentation of peptide antigens to the immune system. This chain is Beta-2-microglobulin (B2M), found in Macaca fascicularis (Crab-eating macaque).